A 460-amino-acid chain; its full sequence is Cysteine--tRNA ligase (460 aa).

Cysteine 29 lines the Zn(2+) pocket. Residues 31–41 (ATPQSSPHIGH) carry the 'HIGH' region motif. Zn(2+) is bound by residues cysteine 212, histidine 237, and glutamate 241. Residues 268–272 (KMSKS) carry the 'KMSKS' region motif. Lysine 271 is a binding site for ATP.

Belongs to the class-I aminoacyl-tRNA synthetase family. Monomer. It depends on Zn(2+) as a cofactor.

It is found in the cytoplasm. It carries out the reaction tRNA(Cys) + L-cysteine + ATP = L-cysteinyl-tRNA(Cys) + AMP + diphosphate. In Corynebacterium glutamicum (strain ATCC 13032 / DSM 20300 / JCM 1318 / BCRC 11384 / CCUG 27702 / LMG 3730 / NBRC 12168 / NCIMB 10025 / NRRL B-2784 / 534), this protein is Cysteine--tRNA ligase.